The sequence spans 268 residues: 4-hydroxy-tetrahydrodipicolinate reductase (268 aa).

NAD(+)-binding positions include 7 to 12 and E33; that span reads GAGGRM. R34 serves as a coordination point for NADP(+). NAD(+) is bound by residues 97-99 and 121-124; these read GTT and SGNM. H155 serves as the catalytic Proton donor/acceptor. A (S)-2,3,4,5-tetrahydrodipicolinate-binding site is contributed by H156. K159 functions as the Proton donor in the catalytic mechanism. 165-166 is a (S)-2,3,4,5-tetrahydrodipicolinate binding site; sequence GT.

The protein belongs to the DapB family.

Its subcellular location is the cytoplasm. The enzyme catalyses (S)-2,3,4,5-tetrahydrodipicolinate + NAD(+) + H2O = (2S,4S)-4-hydroxy-2,3,4,5-tetrahydrodipicolinate + NADH + H(+). The catalysed reaction is (S)-2,3,4,5-tetrahydrodipicolinate + NADP(+) + H2O = (2S,4S)-4-hydroxy-2,3,4,5-tetrahydrodipicolinate + NADPH + H(+). The protein operates within amino-acid biosynthesis; L-lysine biosynthesis via DAP pathway; (S)-tetrahydrodipicolinate from L-aspartate: step 4/4. Catalyzes the conversion of 4-hydroxy-tetrahydrodipicolinate (HTPA) to tetrahydrodipicolinate. The protein is 4-hydroxy-tetrahydrodipicolinate reductase of Brucella melitensis biotype 1 (strain ATCC 23456 / CCUG 17765 / NCTC 10094 / 16M).